Here is a 395-residue protein sequence, read N- to C-terminus: Argininosuccinate synthase (395 aa).

An ATP-binding site is contributed by 8–16 (AYSGGLDTS). Tyr-86 and Ser-91 together coordinate L-citrulline. Gly-116 contributes to the ATP binding site. Positions 118, 122, and 123 each coordinate L-aspartate. Residue Asn-122 participates in L-citrulline binding. Residues Arg-126, Ser-172, Ser-181, Glu-257, and Tyr-269 each contribute to the L-citrulline site.

It belongs to the argininosuccinate synthase family. Type 1 subfamily. Homotetramer.

The protein resides in the cytoplasm. It catalyses the reaction L-citrulline + L-aspartate + ATP = 2-(N(omega)-L-arginino)succinate + AMP + diphosphate + H(+). Its pathway is amino-acid biosynthesis; L-arginine biosynthesis; L-arginine from L-ornithine and carbamoyl phosphate: step 2/3. In Methanosarcina barkeri (strain Fusaro / DSM 804), this protein is Argininosuccinate synthase.